The following is a 134-amino-acid chain: STAG3-like protein 3 (134 aa).

Residues 10 to 95 (PKVTCRDVLP…GCFKDWMVSM (86 aa)) form the SCD domain.

It belongs to the SCC3 family.

The protein resides in the nucleus. This chain is STAG3-like protein 3 (STAG3L3), found in Homo sapiens (Human).